A 20-amino-acid chain; its full sequence is Beta-1,3-glucan-binding protein 2 (20 aa).

Belongs to the insect beta-1,3-glucan binding protein family. Monomer.

The protein resides in the secreted. Its function is as follows. Involved in the recognition of invading microorganisms causing their aggregation. Activates the phenoloxidase cascade. Binds specifically to beta-1,3-glucan. Binds the A.niger cell wall component alpha-1,3-glucan, a fungal pathogen-associated molecular pattern (PAMP) that activates the host immune response. This chain is Beta-1,3-glucan-binding protein 2, found in Galleria mellonella (Greater wax moth).